A 352-amino-acid polypeptide reads, in one-letter code: Peptide chain release factor 1 (352 aa).

Gln-229 bears the N5-methylglutamine mark.

This sequence belongs to the prokaryotic/mitochondrial release factor family. Post-translationally, methylated by PrmC. Methylation increases the termination efficiency of RF1.

It is found in the cytoplasm. Functionally, peptide chain release factor 1 directs the termination of translation in response to the peptide chain termination codons UAG and UAA. The chain is Peptide chain release factor 1 from Gluconacetobacter diazotrophicus (strain ATCC 49037 / DSM 5601 / CCUG 37298 / CIP 103539 / LMG 7603 / PAl5).